The primary structure comprises 354 residues: Glutamine synthetase cytosolic isozyme 1-3 (354 aa).

Ser-2 is subject to N-acetylserine. 2 positions are modified to phosphoserine: Ser-2 and Ser-48. One can recognise a GS beta-grasp domain in the interval 19–99 (IIAEYIWIGG…VMCDAYTPAG (81 aa)). Residues 106–354 (KRHNAAKIFS…SMIAETTILG (249 aa)) enclose the GS catalytic domain.

The protein belongs to the glutamine synthetase family. Homooctamer. Expressed in the pericycle in the region of mature root.

The protein resides in the cytoplasm. The enzyme catalyses L-glutamate + NH4(+) + ATP = L-glutamine + ADP + phosphate + H(+). Low-affinity glutamine synthetase. May contribute to the homeostatic control of glutamine synthesis in roots. The sequence is that of Glutamine synthetase cytosolic isozyme 1-3 (GLN1-3) from Arabidopsis thaliana (Mouse-ear cress).